The primary structure comprises 293 residues: Small ribosomal subunit biogenesis GTPase RsgA (293 aa).

Residues 63 to 223 enclose the CP-type G domain; it reads KNWLVRPPIA…VADTPGFSAL (161 aa). GTP contacts are provided by residues 112 to 115 and 166 to 174; these read NKMD and GQSGVGKSS. Zn(2+)-binding residues include cysteine 247, cysteine 252, histidine 254, and cysteine 260.

This sequence belongs to the TRAFAC class YlqF/YawG GTPase family. RsgA subfamily. As to quaternary structure, monomer. Associates with 30S ribosomal subunit, binds 16S rRNA. Requires Zn(2+) as cofactor.

The protein resides in the cytoplasm. Functionally, one of several proteins that assist in the late maturation steps of the functional core of the 30S ribosomal subunit. Helps release RbfA from mature subunits. May play a role in the assembly of ribosomal proteins into the subunit. Circularly permuted GTPase that catalyzes slow GTP hydrolysis, GTPase activity is stimulated by the 30S ribosomal subunit. The protein is Small ribosomal subunit biogenesis GTPase RsgA of Geobacillus sp. (strain WCH70).